We begin with the raw amino-acid sequence, 119 residues long: Ribonuclease P protein component (119 aa).

This sequence belongs to the RnpA family. Consists of a catalytic RNA component (M1 or rnpB) and a protein subunit.

It carries out the reaction Endonucleolytic cleavage of RNA, removing 5'-extranucleotides from tRNA precursor.. Functionally, RNaseP catalyzes the removal of the 5'-leader sequence from pre-tRNA to produce the mature 5'-terminus. It can also cleave other RNA substrates such as 4.5S RNA. The protein component plays an auxiliary but essential role in vivo by binding to the 5'-leader sequence and broadening the substrate specificity of the ribozyme. The chain is Ribonuclease P protein component from Mycolicibacterium paratuberculosis (strain ATCC BAA-968 / K-10) (Mycobacterium paratuberculosis).